The sequence spans 1365 residues: Patatin-like phospholipase domain-containing protein 6 (1365 aa).

Residues Met-1–Leu-50 lie on the Lumenal side of the membrane. N-linked (GlcNAc...) asparagine glycosylation is present at Asn-11. A helical transmembrane segment spans residues Gly-51–Val-71. The Cytoplasmic portion of the chain corresponds to Arg-72–Ala-1365. Val-186–Arg-313 lines the a nucleoside 3',5'-cyclic phosphate pocket. Disordered stretches follow at residues Phe-343–Phe-427 and Gln-441–Gln-463. Ser-345 is modified (phosphoserine). Residues Thr-350 to Thr-367 are compositionally biased toward polar residues. Thr-352 carries the phosphothreonine modification. Phosphoserine is present on residues Ser-353 and Ser-363. Over residues Gly-375–Thr-389 the composition is skewed to pro residues. Ser-411 bears the Phosphoserine mark. Thr-455 carries the post-translational modification Phosphothreonine. A nucleoside 3',5'-cyclic phosphate-binding positions include Glu-502 to Arg-624 and Thr-620 to Lys-740. A PNPLA domain is found at Leu-971 to Arg-1137. The GXGXXG motif lies at Gly-975–Gly-980. Positions Gly-1002–Gly-1006 match the GXSXG motif. The Nucleophile role is filled by Ser-1004. Catalysis depends on Asp-1124, which acts as the Proton acceptor. The DGA/G motif lies at Asp-1124–Gly-1126. Residues Ser-1296 to Ala-1365 form a disordered region. Residues Ala-1303–Gly-1319 are compositionally biased toward acidic residues.

The protein belongs to the NTE family. Post-translationally, glycosylated.

The protein resides in the endoplasmic reticulum membrane. The enzyme catalyses a 1-acyl-sn-glycero-3-phosphocholine + H2O = sn-glycerol 3-phosphocholine + a fatty acid + H(+). It catalyses the reaction 1-hexadecanoyl-sn-glycero-3-phosphocholine + H2O = sn-glycerol 3-phosphocholine + hexadecanoate + H(+). The catalysed reaction is 1-(9Z-octadecenoyl)-sn-glycero-3-phosphocholine + H2O = sn-glycerol 3-phosphocholine + (9Z)-octadecenoate + H(+). It carries out the reaction 1-hexadecanoylglycerol + H2O = glycerol + hexadecanoate + H(+). The enzyme catalyses 2-hexadecanoylglycerol + H2O = glycerol + hexadecanoate + H(+). It catalyses the reaction 1-(9Z-octadecenoyl)-glycerol + H2O = glycerol + (9Z)-octadecenoate + H(+). The catalysed reaction is 2-(9Z-octadecenoyl)-glycerol + H2O = glycerol + (9Z)-octadecenoate + H(+). It carries out the reaction 2-(5Z,8Z,11Z,14Z-eicosatetraenoyl)-glycerol + H2O = glycerol + (5Z,8Z,11Z,14Z)-eicosatetraenoate + H(+). The enzyme catalyses 1-hexadecanoyl-sn-glycero-3-phosphate + H2O = sn-glycerol 3-phosphate + hexadecanoate + H(+). Its activity is regulated as follows. Inhibited by a series a OPs such as mipafox (MPX), phenyl saligenin phosphate (PSP), phenyl dipentyl phosphinate (PDPP), diisopropyl fluorophosphate and paraoxon. Phospholipase B that deacylates intracellular phosphatidylcholine (PtdCho), generating glycerophosphocholine (GroPtdCho). This deacylation occurs at both sn-2 and sn-1 positions of PtdCho. Catalyzes the hydrolysis of several naturally occurring membrane-associated lipids. Hydrolyzes lysophospholipids and monoacylglycerols, preferring the 1-acyl to the 2-acyl isomer. Does not catalyze hydrolysis of di- or triacylglycerols or fatty acid amides. The sequence is that of Patatin-like phospholipase domain-containing protein 6 (PNPLA6) from Pongo abelii (Sumatran orangutan).